Reading from the N-terminus, the 333-residue chain is Probable HTH-type transcriptional repressor ExuR (333 aa).

Positions 2–56 (VTIKDIAKLANVSHTTVSRALNNSPYIKEHTKKKILELAEQLNYTPNVNAKSLAM) constitute an HTH lacI-type domain. The H-T-H motif DNA-binding region spans 4 to 23 (IKDIAKLANVSHTTVSRALN).

Its function is as follows. Transcriptional repressor for the exu locus which is required for galacturonate utilization. The protein is Probable HTH-type transcriptional repressor ExuR (exuR) of Bacillus subtilis (strain 168).